The primary structure comprises 1159 residues: Ferroxidase HEPHL1 (1159 aa).

Residues 1 to 24 (MPRKQPAGCIFLLTFLGLSGLVGT) form the signal peptide. 6 Plastocyanin-like domains span residues 25–207 (VTRT…LLVC), 218–366 (TRND…VDNC), 379–561 (QRRY…LLVC), 571–719 (TQKG…VSSC), 731–907 (MIRT…LITC), and 915–1092 (KGRR…VPSN). Topologically, residues 25-1114 (VTRTYYIGIV…KNLGPTGAKA (1090 aa)) are extracellular. His127 and His129 together coordinate Cu cation. Asn161 carries an N-linked (GlcNAc...) asparagine glycan. Cys181 and Cys207 form a disulfide bridge. 2 residues coordinate Cu cation: His187 and His189. Asn236 carries N-linked (GlcNAc...) asparagine glycosylation. Cys285 and Cys366 are oxidised to a cystine. The Cu cation site is built by His304, Cys347, and His352. An N-linked (GlcNAc...) asparagine glycan is attached at Asn407. A disulfide bridge connects residues Cys535 and Cys561. Residue Asn589 is glycosylated (N-linked (GlcNAc...) asparagine). The cysteines at positions 638 and 719 are disulfide-linked. Cu cation is bound by residues His657, Cys700, His705, and Met710. N-linked (GlcNAc...) asparagine glycosylation occurs at Asn772. Cys881 and Cys907 are joined by a disulfide. A glycan (N-linked (GlcNAc...) asparagine) is linked at Asn935. 8 residues coordinate Cu cation: His1003, His1006, His1008, His1048, Cys1049, His1050, His1054, and Met1059. The helical transmembrane segment at 1115–1135 (ALVILFIIGLLLLITTVILSL) threads the bilayer. The Cytoplasmic portion of the chain corresponds to 1136 to 1159 (RLCSAMKQTDYQQVQSCALPTDAL).

It belongs to the multicopper oxidase family. It depends on Cu cation as a cofactor.

The protein resides in the membrane. The enzyme catalyses 4 Fe(2+) + O2 + 4 H(+) = 4 Fe(3+) + 2 H2O. Functionally, is a copper-binding glycoprotein with ferroxidase activity. It oxidizes Fe(2+) to Fe(3+) without releasing radical oxygen species. May be involved in the regulation of intracellular iron content. This chain is Ferroxidase HEPHL1 (HEPHL1), found in Homo sapiens (Human).